We begin with the raw amino-acid sequence, 78 residues long: Large ribosomal subunit protein bL28 (78 aa).

The tract at residues 1-25 is disordered; the sequence is MSRVCQVTGKRPTVGNNRSHARNAT.

Belongs to the bacterial ribosomal protein bL28 family.

This chain is Large ribosomal subunit protein bL28, found in Alteromonas mediterranea (strain DSM 17117 / CIP 110805 / LMG 28347 / Deep ecotype).